A 152-amino-acid polypeptide reads, in one-letter code: Endoribonuclease YbeY (152 aa).

Residues His111, His115, and His121 each coordinate Zn(2+).

It belongs to the endoribonuclease YbeY family. The cofactor is Zn(2+).

Its subcellular location is the cytoplasm. Functionally, single strand-specific metallo-endoribonuclease involved in late-stage 70S ribosome quality control and in maturation of the 3' terminus of the 16S rRNA. This is Endoribonuclease YbeY from Pseudomonas fluorescens (strain ATCC BAA-477 / NRRL B-23932 / Pf-5).